The primary structure comprises 446 residues: uncharacterized protein (446 aa).

The segment at 141-282 (TEAETNGTRP…GPKPKVKRVS (142 aa)) is disordered. Polar residues predominate over residues 159-170 (NSGSKPKAGTQS). Over residues 194 to 210 (IKSERRSISQGGEKDKA) the composition is skewed to basic and acidic residues. 4 positions are modified to phosphoserine: Ser200, Ser202, Ser212, and Ser214. Composition is skewed to low complexity over residues 211-221 (SSSSPSSSQQS) and 229-239 (SPSQQNSRSSS). Phosphoserine is present on Ser251. Positions 269–280 (GKSRGPKPKVKR) are enriched in basic residues. Phosphoserine is present on residues Ser282 and Ser307.

This is an uncharacterized protein from Drosophila melanogaster (Fruit fly).